A 500-amino-acid polypeptide reads, in one-letter code: MPTSRRALAGGALSMHVAYFLAISCLGYGLLGVLKVREPGAAPRRIDRFFTAVSAATVSSMSTVEMEVFSNGQLVVLTVLMLLGGEVFVSLVGLASKWSKLRSDAMDRSRRVESHGDVALADIDGGDVENPTSSGEEAASRRRPMDADTLRHNAVRALFYIVLAIFAVVHVVGAVAVAAYVLASPGARRTLGDKSLNTWTFAVFTTVSTFSNCGFMPTNENMVVFKRDAPLQLLLVPQVLAGNTLFAPLLAACVWAAAAATRREELVEMAREGGRAAAAGYAHLMPARRCWMLAATVAAFVAVLMALVCGMEWGGALQGMSPWEKVVNALFLAVNARHTGESTVDLSILAPAILVLFVLMMYLPPYTTWFPFEENSTTKDSNAENQGIRLLESTLLSQLSYLTIFVIAICITERRKLKEDPLNFSVLSIVVEVVSAYGNVGFSMGYSCSRQINPDHLCTDKWTGFVGRWSDSGKLILIFVMFFGRLKKFSMKGGKAWKLS.

Over 1–12 the chain is Cytoplasmic; sequence MPTSRRALAGGA. The next 2 membrane-spanning stretches (helical) occupy residues 13–33 and 74–94; these read LSMH…LLGV and LVVL…LVGL. Topologically, residues 95-156 are cytoplasmic; that stretch reads ASKWSKLRSD…ADTLRHNAVR (62 aa). The segment at 121 to 145 is disordered; the sequence is ADIDGGDVENPTSSGEEAASRRRPM. 2 helical membrane-spanning segments follow: residues 157–177 and 239–259; these read ALFY…AVAV and VLAG…AAAA. Residues 260-290 lie on the Cytoplasmic side of the membrane; it reads ATRREELVEMAREGGRAAAAGYAHLMPARRC. 2 helical membrane passes run 291 to 311 and 346 to 366; these read WMLA…VCGM and LSIL…LPPY. Residues 367-390 are Cytoplasmic-facing; it reads TTWFPFEENSTTKDSNAENQGIRL. The next 2 helical transmembrane spans lie at 391 to 411 and 464 to 484; these read LEST…AICI and GFVG…MFFG. Topologically, residues 485 to 500 are cytoplasmic; it reads RLKKFSMKGGKAWKLS.

Belongs to the TrkH potassium transport family. HKT (TC 2.A.38.3) subfamily.

It localises to the membrane. In terms of biological role, probable cation transporter. May be involved in regulation of potassium-sodium homeostasis. This chain is Probable cation transporter HKT1;4, found in Oryza sativa subsp. japonica (Rice).